The chain runs to 114 residues: Large ribosomal subunit protein uL18 (114 aa).

Belongs to the universal ribosomal protein uL18 family. In terms of assembly, part of the 50S ribosomal subunit; part of the 5S rRNA/L5/L18/L25 subcomplex. Contacts the 5S and 23S rRNAs.

Functionally, this is one of the proteins that bind and probably mediate the attachment of the 5S RNA into the large ribosomal subunit, where it forms part of the central protuberance. The chain is Large ribosomal subunit protein uL18 from Bacteroides fragilis (strain ATCC 25285 / DSM 2151 / CCUG 4856 / JCM 11019 / LMG 10263 / NCTC 9343 / Onslow / VPI 2553 / EN-2).